The following is a 395-amino-acid chain: Flagellin B (395 aa).

The protein belongs to the bacterial flagellin family.

It localises to the secreted. The protein localises to the bacterial flagellum. Functionally, flagellin is the subunit protein which polymerizes to form the filaments of bacterial flagella. The protein is Flagellin B (flaB) of Rhizobium meliloti (Ensifer meliloti).